A 245-amino-acid chain; its full sequence is 1-(5-phosphoribosyl)-5-[(5-phosphoribosylamino)methylideneamino] imidazole-4-carboxamide isomerase (245 aa).

D10 serves as the catalytic Proton acceptor. The active-site Proton donor is the D135.

This sequence belongs to the HisA/HisF family.

The protein resides in the cytoplasm. The enzyme catalyses 1-(5-phospho-beta-D-ribosyl)-5-[(5-phospho-beta-D-ribosylamino)methylideneamino]imidazole-4-carboxamide = 5-[(5-phospho-1-deoxy-D-ribulos-1-ylimino)methylamino]-1-(5-phospho-beta-D-ribosyl)imidazole-4-carboxamide. The protein operates within amino-acid biosynthesis; L-histidine biosynthesis; L-histidine from 5-phospho-alpha-D-ribose 1-diphosphate: step 4/9. The polypeptide is 1-(5-phosphoribosyl)-5-[(5-phosphoribosylamino)methylideneamino] imidazole-4-carboxamide isomerase (Methanosarcina acetivorans (strain ATCC 35395 / DSM 2834 / JCM 12185 / C2A)).